Consider the following 417-residue polypeptide: Dihydrolipoyllysine-residue succinyltransferase component of 2-oxoglutarate dehydrogenase complex (417 aa).

Residues 1–76 (MAEIKVPELA…QVGEIIGTIS (76 aa)) form the Lipoyl-binding domain. Position 42 is an N6-lipoyllysine (lysine 42). The disordered stretch occupies residues 75–191 (ISEGAGESSA…SFDKPVEVQK (117 aa)). Composition is skewed to basic and acidic residues over residues 89 to 103 (EKTE…EKQA) and 152 to 163 (RKQDVEAYEKPA). A Peripheral subunit-binding (PSBD) domain is found at 123–160 (IASPSARKLAREKGIDLSQVPTGDPLGRVRKQDVEAYE). Over residues 164-182 (SKPAPQQKQQPQAQKAQQS) the composition is skewed to low complexity. Active-site residues include histidine 388 and aspartate 392.

Belongs to the 2-oxoacid dehydrogenase family. In terms of assembly, forms a 24-polypeptide structural core with octahedral symmetry. Part of the 2-oxoglutarate dehydrogenase (OGDH) complex composed of E1 (2-oxoglutarate dehydrogenase), E2 (dihydrolipoamide succinyltransferase) and E3 (dihydrolipoamide dehydrogenase); the complex contains multiple copies of the three enzymatic components (E1, E2 and E3). Requires (R)-lipoate as cofactor.

The enzyme catalyses N(6)-[(R)-dihydrolipoyl]-L-lysyl-[protein] + succinyl-CoA = N(6)-[(R)-S(8)-succinyldihydrolipoyl]-L-lysyl-[protein] + CoA. Its pathway is amino-acid degradation; L-lysine degradation via saccharopine pathway; glutaryl-CoA from L-lysine: step 6/6. In terms of biological role, E2 component of the 2-oxoglutarate dehydrogenase (OGDH) complex which catalyzes the second step in the conversion of 2-oxoglutarate to succinyl-CoA and CO(2). The sequence is that of Dihydrolipoyllysine-residue succinyltransferase component of 2-oxoglutarate dehydrogenase complex (odhB) from Bacillus subtilis (strain 168).